Here is a 590-residue protein sequence, read N- to C-terminus: Aspartate--tRNA(Asp/Asn) ligase (590 aa).

Glutamate 175 provides a ligand contact to L-aspartate. The aspartate stretch occupies residues 199–202 (QQYK). Residues arginine 221 and histidine 450 each coordinate L-aspartate. 221–223 (RDE) lines the ATP pocket. An ATP-binding site is contributed by glutamate 484. Arginine 491 is an L-aspartate binding site. 536–539 (GVDR) lines the ATP pocket.

This sequence belongs to the class-II aminoacyl-tRNA synthetase family. Type 1 subfamily. In terms of assembly, homodimer.

It is found in the cytoplasm. The enzyme catalyses tRNA(Asx) + L-aspartate + ATP = L-aspartyl-tRNA(Asx) + AMP + diphosphate. Its function is as follows. Aspartyl-tRNA synthetase with relaxed tRNA specificity since it is able to aspartylate not only its cognate tRNA(Asp) but also tRNA(Asn). Reaction proceeds in two steps: L-aspartate is first activated by ATP to form Asp-AMP and then transferred to the acceptor end of tRNA(Asp/Asn). This chain is Aspartate--tRNA(Asp/Asn) ligase, found in Rhodopseudomonas palustris (strain BisB5).